A 228-amino-acid chain; its full sequence is 7-cyano-7-deazaguanine synthase (228 aa).

16-26 (FSGGQDSTTCL) serves as a coordination point for ATP. Zn(2+)-binding residues include cysteine 195, cysteine 203, cysteine 206, and cysteine 209.

It belongs to the QueC family. Requires Zn(2+) as cofactor.

The enzyme catalyses 7-carboxy-7-deazaguanine + NH4(+) + ATP = 7-cyano-7-deazaguanine + ADP + phosphate + H2O + H(+). It participates in purine metabolism; 7-cyano-7-deazaguanine biosynthesis. Functionally, catalyzes the ATP-dependent conversion of 7-carboxy-7-deazaguanine (CDG) to 7-cyano-7-deazaguanine (preQ(0)). The sequence is that of 7-cyano-7-deazaguanine synthase from Haemophilus influenzae (strain ATCC 51907 / DSM 11121 / KW20 / Rd).